The primary structure comprises 92 residues: LYR motif-containing protein 4A (92 aa).

The protein belongs to the complex I LYR family.

The polypeptide is LYR motif-containing protein 4A (lyrm4a) (Salmo salar (Atlantic salmon)).